The chain runs to 363 residues: Phosphoserine aminotransferase (363 aa).

R41 is a binding site for L-glutamate. Residues 75–76 (AS), W100, T155, D175, and Q198 each bind pyridoxal 5'-phosphate. N6-(pyridoxal phosphate)lysine is present on K199. 239–240 (NT) provides a ligand contact to pyridoxal 5'-phosphate.

It belongs to the class-V pyridoxal-phosphate-dependent aminotransferase family. SerC subfamily. As to quaternary structure, homodimer. Pyridoxal 5'-phosphate serves as cofactor.

Its subcellular location is the cytoplasm. The catalysed reaction is O-phospho-L-serine + 2-oxoglutarate = 3-phosphooxypyruvate + L-glutamate. It catalyses the reaction 4-(phosphooxy)-L-threonine + 2-oxoglutarate = (R)-3-hydroxy-2-oxo-4-phosphooxybutanoate + L-glutamate. It functions in the pathway amino-acid biosynthesis; L-serine biosynthesis; L-serine from 3-phospho-D-glycerate: step 2/3. Its function is as follows. Catalyzes the reversible conversion of 3-phosphohydroxypyruvate to phosphoserine and of 3-hydroxy-2-oxo-4-phosphonooxybutanoate to phosphohydroxythreonine. The chain is Phosphoserine aminotransferase from Streptococcus agalactiae serotype III (strain NEM316).